We begin with the raw amino-acid sequence, 613 residues long: Xaa-Pro aminopeptidase ApepP (613 aa).

Substrate contacts are provided by R77 and H388. The Mn(2+) site is built by D408, D419, and H482. Substrate-binding residues include H482, H491, and E517. Mn(2+)-binding residues include E517 and E531.

It belongs to the peptidase M24B family. It depends on Mn(2+) as a cofactor. Detected in gut, brain, testes and ovary.

Its subcellular location is the cytoplasm. The catalysed reaction is Release of any N-terminal amino acid, including proline, that is linked to proline, even from a dipeptide or tripeptide.. With respect to regulation, inhibited by the chelating agent EDTA. Divalent metal ions have substrate- and concentration-dependent effects on activity. Activity towards bradykinin is inhibited with increasing Mn(2+) concentration. Activity towards substance P is stimulated by low Mn(2+) concentrations (in the range 10 uM-1 mM) but inhibited by Mn(2+) concentrations in excess of 1 mM. Ca(2+), Mg(2+) and Co(2+) stimulate activity towards substance P at concentrations of 10-100 uM but are inhibitory at concentrations of 1 mM. Zn(2+), Ni(2+) and Cu(2+) strongly inhibit activity towards substance P at concentrations of 1 mM. Catalyzes the removal of a penultimate prolyl residue from the N-termini of peptides, such as Arg-Pro-Pro. The polypeptide is Xaa-Pro aminopeptidase ApepP (Drosophila melanogaster (Fruit fly)).